Reading from the N-terminus, the 447-residue chain is Serine--tRNA ligase (447 aa).

Position 245–247 (245–247 (TAE)) interacts with L-serine. ATP is bound by residues 276-278 (RKE) and V292. E299 provides a ligand contact to L-serine. 363–366 (ELAS) contacts ATP. Position 398 (T398) interacts with L-serine.

This sequence belongs to the class-II aminoacyl-tRNA synthetase family. Type-1 seryl-tRNA synthetase subfamily. In terms of assembly, homodimer. The tRNA molecule binds across the dimer.

It is found in the cytoplasm. The catalysed reaction is tRNA(Ser) + L-serine + ATP = L-seryl-tRNA(Ser) + AMP + diphosphate + H(+). It catalyses the reaction tRNA(Sec) + L-serine + ATP = L-seryl-tRNA(Sec) + AMP + diphosphate + H(+). It participates in aminoacyl-tRNA biosynthesis; selenocysteinyl-tRNA(Sec) biosynthesis; L-seryl-tRNA(Sec) from L-serine and tRNA(Sec): step 1/1. Functionally, catalyzes the attachment of serine to tRNA(Ser). Is also able to aminoacylate tRNA(Sec) with serine, to form the misacylated tRNA L-seryl-tRNA(Sec), which will be further converted into selenocysteinyl-tRNA(Sec). This is Serine--tRNA ligase from Pyrobaculum neutrophilum (strain DSM 2338 / JCM 9278 / NBRC 100436 / V24Sta) (Thermoproteus neutrophilus).